The chain runs to 612 residues: Phosphomethylpyrimidine synthase (612 aa).

Disordered regions lie at residues 1–33 (MTIK…TEAG) and 105–146 (AGRP…RDGN). The segment covering 12–24 (TQNTAQADTAENT) has biased composition (low complexity). The segment covering 105–117 (AGRPVRPEDDGIK) has biased composition (basic and acidic residues). Substrate is bound by residues N213, M242, Y271, H307, 327 to 329 (SRG), 368 to 371 (DGLR), and E407. H411 serves as a coordination point for Zn(2+). Y434 is a substrate binding site. Position 475 (H475) interacts with Zn(2+). 3 residues coordinate [4Fe-4S] cluster: C555, C558, and C563.

It belongs to the ThiC family. [4Fe-4S] cluster is required as a cofactor.

It carries out the reaction 5-amino-1-(5-phospho-beta-D-ribosyl)imidazole + S-adenosyl-L-methionine = 4-amino-2-methyl-5-(phosphooxymethyl)pyrimidine + CO + 5'-deoxyadenosine + formate + L-methionine + 3 H(+). It participates in cofactor biosynthesis; thiamine diphosphate biosynthesis. In terms of biological role, catalyzes the synthesis of the hydroxymethylpyrimidine phosphate (HMP-P) moiety of thiamine from aminoimidazole ribotide (AIR) in a radical S-adenosyl-L-methionine (SAM)-dependent reaction. The sequence is that of Phosphomethylpyrimidine synthase from Streptomyces coelicolor (strain ATCC BAA-471 / A3(2) / M145).